Reading from the N-terminus, the 251-residue chain is MRQIIIAGNWKMNTTLSEACTLVQGMKYELDQISGIQKIVCPPFISLAPVKTILDGSSIHLGAQNLFYEEKGAYTGEISPLMLQDICPYVIIGHSERRAYFGETGQVVNRKIKAALQAGIMPIVCVGEKLEENENGQTRQILETQMKEALAGINPSSIIIAYEPIWAIGTGKAATAAEANNTISYIRKVLGDIWGNTASRITPILYGGSVNEKNTAELLCQSDIDGALVGGASLKAESFVSICRQAADVRK.

Residue 9 to 11 (NWK) coordinates substrate. The active-site Electrophile is the His94. Glu163 (proton acceptor) is an active-site residue. Substrate contacts are provided by residues Gly169, Ser209, and 230-231 (GG).

The protein belongs to the triosephosphate isomerase family. In terms of assembly, homodimer.

The protein resides in the cytoplasm. The enzyme catalyses D-glyceraldehyde 3-phosphate = dihydroxyacetone phosphate. It participates in carbohydrate biosynthesis; gluconeogenesis. Its pathway is carbohydrate degradation; glycolysis; D-glyceraldehyde 3-phosphate from glycerone phosphate: step 1/1. Its function is as follows. Involved in the gluconeogenesis. Catalyzes stereospecifically the conversion of dihydroxyacetone phosphate (DHAP) to D-glyceraldehyde-3-phosphate (G3P). The polypeptide is Triosephosphate isomerase (Dehalococcoides mccartyi (strain ATCC BAA-2266 / KCTC 15142 / 195) (Dehalococcoides ethenogenes (strain 195))).